The chain runs to 410 residues: Exodeoxyribonuclease 7 large subunit (410 aa).

The protein belongs to the XseA family. In terms of assembly, heterooligomer composed of large and small subunits.

The protein resides in the cytoplasm. The enzyme catalyses Exonucleolytic cleavage in either 5'- to 3'- or 3'- to 5'-direction to yield nucleoside 5'-phosphates.. In terms of biological role, bidirectionally degrades single-stranded DNA into large acid-insoluble oligonucleotides, which are then degraded further into small acid-soluble oligonucleotides. The sequence is that of Exodeoxyribonuclease 7 large subunit from Alkaliphilus metalliredigens (strain QYMF).